The primary structure comprises 1196 residues: uncharacterized protein (1196 aa).

A helical membrane pass occupies residues 27–47; that stretch reads ILLLLGSFILLNVWINVVTLL. Disordered stretches follow at residues 150-345, 367-402, 669-762, 775-806, 826-877, 960-1009, and 1168-1196; these read GGGE…PQAH, SSVP…ASAP, TQDS…QKNT, CLTQ…DSGI, QATD…QDSE, YRSS…GPYK, and KCEA…DIRM. Residues 157–177 show a composition bias toward polar residues; that stretch reads VTASKAQASLLSRPETSSQFP. Low complexity-rich tracts occupy residues 212–227 and 253–279; these read HSPT…HPWT and THSQ…TPAH. The segment covering 299 to 321 has biased composition (polar residues); it reads HTSAQAQTHSPPHTPEYTHSQAH. The segment covering 391–402 has biased composition (pro residues); that stretch reads APTPAPVPASAP. Composition is skewed to polar residues over residues 733–742, 750–762, 787–804, and 826–849; these read YLCQNPSPSQ, SGIT…QKNT, PFTQ…TQDS, and QATD…TGNV. Over residues 962–971 the composition is skewed to basic and acidic residues; it reads SSEHSQDSNL.

The protein resides in the membrane. This is an uncharacterized protein from Homo sapiens (Human).